Here is a 266-residue protein sequence, read N- to C-terminus: Undecaprenyl-diphosphatase (266 aa).

7 helical membrane-spanning segments follow: residues 39–59 (PGASLSATIQLGSVIAIAYYF), 86–106 (SIFIGTIPIVLLGGSIKIFIP), 112–132 (VLRSNLSIALVSFLMAFFMYL), 147–167 (NFSNSFLIGIFQAFAIFPGVS), 189–209 (FSFLLGMPAISLAAIVEFVSS), 216–236 (LGFFPLFVGLITTFLSSLLAI), and 246–266 (NGLKIFIIYRVIFGVVILLNL).

It belongs to the UppP family.

It localises to the cell inner membrane. The catalysed reaction is di-trans,octa-cis-undecaprenyl diphosphate + H2O = di-trans,octa-cis-undecaprenyl phosphate + phosphate + H(+). Catalyzes the dephosphorylation of undecaprenyl diphosphate (UPP). Confers resistance to bacitracin. This chain is Undecaprenyl-diphosphatase, found in Prochlorococcus marinus (strain MIT 9301).